Reading from the N-terminus, the 339-residue chain is DNA-directed RNA polymerase subunit alpha (339 aa).

Residues 1-233 (MVREEITGST…DLFLPFIHTE (233 aa)) form an alpha N-terminal domain (alpha-NTD) region. An alpha C-terminal domain (alpha-CTD) region spans residues 266–339 (GIPLNCIFID…IDLPKNKFSL (74 aa)).

This sequence belongs to the RNA polymerase alpha chain family. In plastids the minimal PEP RNA polymerase catalytic core is composed of four subunits: alpha, beta, beta', and beta''. When a (nuclear-encoded) sigma factor is associated with the core the holoenzyme is formed, which can initiate transcription.

Its subcellular location is the plastid. The protein localises to the chloroplast. The catalysed reaction is RNA(n) + a ribonucleoside 5'-triphosphate = RNA(n+1) + diphosphate. Its function is as follows. DNA-dependent RNA polymerase catalyzes the transcription of DNA into RNA using the four ribonucleoside triphosphates as substrates. This is DNA-directed RNA polymerase subunit alpha from Sorghum bicolor (Sorghum).